Consider the following 143-residue polypeptide: uncharacterized protein (143 aa).

Positions 111–143 (VTQDISHTSGKSPTPKAKSSSPKKSKKKNWIPL) are disordered. The segment covering 119 to 130 (SGKSPTPKAKSS) has biased composition (low complexity). Over residues 131-143 (SPKKSKKKNWIPL) the composition is skewed to basic residues.

It belongs to the chlamydial CPn_0742/CT_635/TC_0003 family.

This is an uncharacterized protein from Chlamydia muridarum (strain MoPn / Nigg).